We begin with the raw amino-acid sequence, 525 residues long: GMP synthase [glutamine-hydrolyzing] (525 aa).

Positions 16–205 (PVLVVDFGAQ…LHDFAGLGAD (190 aa)) constitute a Glutamine amidotransferase type-1 domain. C93 (nucleophile) is an active-site residue. Residues H179 and E181 contribute to the active site. The GMPS ATP-PPase domain occupies 206–399 (WTAANIAGVL…LGLPEEIVAR (194 aa)). 233-239 (SGGVDSA) is an ATP binding site.

Homodimer.

It catalyses the reaction XMP + L-glutamine + ATP + H2O = GMP + L-glutamate + AMP + diphosphate + 2 H(+). It functions in the pathway purine metabolism; GMP biosynthesis; GMP from XMP (L-Gln route): step 1/1. Catalyzes the synthesis of GMP from XMP. The sequence is that of GMP synthase [glutamine-hydrolyzing] from Mycolicibacterium paratuberculosis (strain ATCC BAA-968 / K-10) (Mycobacterium paratuberculosis).